Consider the following 465-residue polypeptide: Cysteine--tRNA ligase (465 aa).

C27 lines the Zn(2+) pocket. Residues 29-39 (PTVYNFFHIGN) carry the 'HIGH' region motif. 3 residues coordinate Zn(2+): C207, H232, and E236. The 'KMSKS' region motif lies at 264–268 (KMSKS). Position 267 (K267) interacts with ATP.

This sequence belongs to the class-I aminoacyl-tRNA synthetase family. Monomer. Requires Zn(2+) as cofactor.

It is found in the cytoplasm. The catalysed reaction is tRNA(Cys) + L-cysteine + ATP = L-cysteinyl-tRNA(Cys) + AMP + diphosphate. This is Cysteine--tRNA ligase from Clostridium botulinum (strain Langeland / NCTC 10281 / Type F).